Consider the following 321-residue polypeptide: Biotin synthase (321 aa).

Positions 44 to 270 constitute a Radical SAM core domain; the sequence is RGVRIHILNN…DAEVRAAGGR (227 aa). Positions 59, 63, and 66 each coordinate [4Fe-4S] cluster. [2Fe-2S] cluster contacts are provided by cysteine 103, cysteine 135, cysteine 195, and arginine 265.

Belongs to the radical SAM superfamily. Biotin synthase family. Homodimer. [4Fe-4S] cluster is required as a cofactor. [2Fe-2S] cluster serves as cofactor.

It carries out the reaction (4R,5S)-dethiobiotin + (sulfur carrier)-SH + 2 reduced [2Fe-2S]-[ferredoxin] + 2 S-adenosyl-L-methionine = (sulfur carrier)-H + biotin + 2 5'-deoxyadenosine + 2 L-methionine + 2 oxidized [2Fe-2S]-[ferredoxin]. It functions in the pathway cofactor biosynthesis; biotin biosynthesis; biotin from 7,8-diaminononanoate: step 2/2. In terms of biological role, catalyzes the conversion of dethiobiotin (DTB) to biotin by the insertion of a sulfur atom into dethiobiotin via a radical-based mechanism. This chain is Biotin synthase, found in Magnetococcus marinus (strain ATCC BAA-1437 / JCM 17883 / MC-1).